A 244-amino-acid polypeptide reads, in one-letter code: Flavin-dependent thymidylate synthase (244 aa).

Residues 2-207 (VRVTLVNYTK…DIRPIIKWAK (206 aa)) enclose the ThyX domain. FAD-binding positions include Ser-56, 80 to 82 (RHR), and Gln-88. DUMP is bound by residues 77–80 (QLVR), 88–92 (QQSQR), and Arg-146. Positions 80-90 (RHRIASYTQQS) match the ThyX motif motif. FAD is bound by residues 162–164 (NLR) and His-168. Residue Arg-173 participates in dUMP binding. Residue Arg-173 is the Involved in ionization of N3 of dUMP, leading to its activation of the active site.

Belongs to the thymidylate synthase ThyX family. In terms of assembly, homotetramer. The cofactor is FAD.

The catalysed reaction is dUMP + (6R)-5,10-methylene-5,6,7,8-tetrahydrofolate + NADPH + H(+) = dTMP + (6S)-5,6,7,8-tetrahydrofolate + NADP(+). The protein operates within pyrimidine metabolism; dTTP biosynthesis. In terms of biological role, catalyzes the reductive methylation of 2'-deoxyuridine-5'-monophosphate (dUMP) to 2'-deoxythymidine-5'-monophosphate (dTMP) while utilizing 5,10-methylenetetrahydrofolate (mTHF) as the methyl donor, and NADPH and FADH(2) as the reductant. This chain is Flavin-dependent thymidylate synthase, found in Pyrococcus furiosus (strain ATCC 43587 / DSM 3638 / JCM 8422 / Vc1).